Reading from the N-terminus, the 164-residue chain is MEIPVSVQPSWLRRASAPLPGLSAPGRLFDQRFGEGLLEAELAALCPAALAPYYLRAPSVALPTAQVSTDPGHFSVLLDVKHFSPEEIAVKVVGDHVEVHARHEERPDEHGYIAREFHRRYRLPPGVDPAAVTSALSPEGVLSIQAAPAPAQAPLQSPPGAAAK.

Positions 1 to 72 are involved in stabilization of the HSPB1:HSBP6 heterodimer; that stretch reads MEIPVSVQPS…PTAQVSTDPG (72 aa). Residue S16 is modified to Phosphoserine. A sHSP domain is found at 56–163; it reads RAPSVALPTA…PLQSPPGAAA (108 aa). Q66 carries the deamidated glutamine modification. S157 bears the Phosphoserine mark.

This sequence belongs to the small heat shock protein (HSP20) family. As to quaternary structure, homodimer. Small heat shock proteins form high molecular mass oligomers containing variable number of monomers; these oligomers display a very flexible quaternary structure easily exchanging their subunits. Heterooligomer with HSPB1; formed through oligomerization of HSPB1:HSBP6 dimers; subunit exchange leads to formation of at least two different heterooligomeric complexes, differing in variable quantities of HSPB1 and HSPB6 homodimers in addition to HSPB1:HSPB6 heterodimers. Heterooligomer with CRYAB; large heterooligomers consist of CRYAB homodimers and HSPB5:HSPB6 heterodimers but lacking HSPB6 homodimers. Interacts with BAG3. Interacts (phosphorylated) with YWHAZ. Interacts with PDE4A and PDE4D; required for maintenance of the non-phosphorylated state of HSPB6 under basal conditions. Interacts with KDR. Interacts with PRKD1. Phosphorylated at Ser-16 by PKA and probably PKD1K; required to protect cardiomyocytes from apoptosis.

The protein localises to the cytoplasm. It localises to the nucleus. It is found in the secreted. Its function is as follows. Small heat shock protein which functions as a molecular chaperone probably maintaining denatured proteins in a folding-competent state. Seems to have versatile functions in various biological processes. Plays a role in regulating muscle function such as smooth muscle vasorelaxation and cardiac myocyte contractility. May regulate myocardial angiogenesis implicating KDR. Overexpression mediates cardioprotection and angiogenesis after induced damage. Stabilizes monomeric YWHAZ thereby supporting YWHAZ chaperone-like activity. The sequence is that of Heat shock protein beta-6 (HSPB6) from Bos taurus (Bovine).